The sequence spans 253 residues: Hydroxyacylglutathione hydrolase (253 aa).

Positions 54, 56, 58, 59, 112, 131, and 169 each coordinate Zn(2+).

Belongs to the metallo-beta-lactamase superfamily. Glyoxalase II family. As to quaternary structure, monomer. It depends on Zn(2+) as a cofactor.

It catalyses the reaction an S-(2-hydroxyacyl)glutathione + H2O = a 2-hydroxy carboxylate + glutathione + H(+). The protein operates within secondary metabolite metabolism; methylglyoxal degradation; (R)-lactate from methylglyoxal: step 2/2. In terms of biological role, thiolesterase that catalyzes the hydrolysis of S-D-lactoyl-glutathione to form glutathione and D-lactic acid. This is Hydroxyacylglutathione hydrolase from Bartonella quintana (strain Toulouse) (Rochalimaea quintana).